Reading from the N-terminus, the 1094-residue chain is Formin-like protein 1 (1094 aa).

Disordered stretches follow at residues 1–29 (MGNA…KQPM), 173–199 (SGAE…VPKS), and 507–627 (AATP…GVKA). Residue glycine 2 is the site of N-myristoyl glycine attachment. Serine 7 is subject to Phosphoserine. Residues 16–28 (ASPPKQPAVPKQP) show a composition bias toward pro residues. The GBD/FH3 domain maps to 27–464 (QPMPAAGELE…SRRIPEPEKV (438 aa)). Serine 184 carries the phosphoserine modification. A compositionally biased stretch (polar residues) spans 519–529 (RVSTDSPSTAE). 2 stretches are compositionally biased toward pro residues: residues 535-549 (ASPP…PPLP) and 559-610 (PSAP…PGGP). An FH2 domain is found at 627–1018 (AKKPIQTKFR…DTSGREEPPT (392 aa)). Serine 688 is subject to Phosphoserine. A compositionally biased stretch (basic and acidic residues) spans 1002–1017 (WKKEAAADTSGREEPP). The interval 1002 to 1094 (WKKEAAADTS…PLPVTTDLAL (93 aa)) is disordered. Serine 1021 carries the post-translational modification Phosphoserine. In terms of domain architecture, DAD spans 1049 to 1082 (SDRDGAIEDIITDLRNQPYIRADTGRRSARRRPP).

It belongs to the formin homology family. As to quaternary structure, interacts with RAC1, PFN1 and PFN2. Interacts (activated by RAC1) with SRGAP2 (via SH3 domain); regulates the actin filament severing activity of FMNL1. In terms of processing, myristoylation mediates membrane localization. As to expression, highly expressed in the spleen, lymph node and bone marrow cells.

Its subcellular location is the cytoplasm. It is found in the cell membrane. The protein resides in the cytoplasmic vesicle. It localises to the phagosome. In terms of biological role, plays a role in the regulation of cell morphology and cytoskeletal organization. Required in the cortical actin filament dynamics and cell shape. May play a role in the control of cell motility and survival of macrophages. The chain is Formin-like protein 1 (Fmnl1) from Mus musculus (Mouse).